We begin with the raw amino-acid sequence, 650 residues long: Pentatricopeptide repeat-containing protein At1g51965, mitochondrial (650 aa).

Residues 1–23 constitute a mitochondrion transit peptide; it reads MKLLRRRFFNSVNTITRPNRRHY. PPR repeat units follow at residues 132–169, 170–200, 202–236, 237–267, 269–303, 304–338, 339–369, 371–405, 406–440, 441–475, 476–510, 511–545, 546–580, and 581–615; these read DPFL…NVHG, NIST…WDLK, NSFT…GHKL, DIFA…RHCR, DEYT…GLTL, NVVG…GCRP, NEYT…SKRY, TQGI…PVKG, ERDS…GVVT, DTMM…GPSP, DIFT…DCKP, DIIS…GLNP, DVVT…GCQP, and NIVT…GLTP.

This sequence belongs to the PPR family. P subfamily.

The protein resides in the mitochondrion. This is Pentatricopeptide repeat-containing protein At1g51965, mitochondrial from Arabidopsis thaliana (Mouse-ear cress).